The primary structure comprises 409 residues: Nucleoprotein (409 aa).

2 disordered regions span residues 1-64 (MSAG…SNVK) and 167-197 (RNSS…VDDD). An RNA-binding region spans residues 30–161 (GTGQASWFQS…NNYRWDFIAL (132 aa)). One can recognise a CoV N NTD domain in the interval 32 to 157 (GQASWFQSLK…GGPDNNYRWD (126 aa)). Positions 176–197 (ENSRPGSRDSSRGRQRSRVDDD) are enriched in basic and acidic residues. Ser192 carries the post-translational modification Phosphoserine; by host. Residues 217–333 (SKQKANEMAE…ECVDGVGTRP (117 aa)) enclose the CoV N CTD domain. The tract at residues 228-335 (KYHKRAIAPG…VDGVGTRPKD (108 aa)) is dimerization. Cys322 and Cys325 are disulfide-bonded. The disordered stretch occupies residues 327-409 (DGVGTRPKDD…GEGAFDDINI (83 aa)). The segment covering 332-349 (RPKDDPTPRSRAASKDRN) has biased composition (basic and acidic residues). Phosphothreonine; by host is present on Thr374.

Belongs to the gammacoronavirus nucleocapsid protein family. As to quaternary structure, homooligomer. Both monomeric and oligomeric forms interact with RNA. Interacts with protein M. Interacts with NSP3; this interaction serves to tether the genome to the newly translated replicase-transcriptase complex at a very early stage of infection. Post-translationally, ADP-ribosylated. The ADP-ribosylation is retained in the virion during infection. Phosphorylated on serine and threonine residues.

It is found in the virion. The protein resides in the host endoplasmic reticulum-Golgi intermediate compartment. Its subcellular location is the host Golgi apparatus. Packages the positive strand viral genome RNA into a helical ribonucleocapsid (RNP) and plays a fundamental role during virion assembly through its interactions with the viral genome and membrane protein M. Plays an important role in enhancing the efficiency of subgenomic viral RNA transcription as well as viral replication. This chain is Nucleoprotein, found in Gallus gallus (Chicken).